Reading from the N-terminus, the 325-residue chain is Phospholipid phosphatase-related protein type 1 (325 aa).

N-linked (GlcNAc...) asparagine glycosylation occurs at Asn-5. The next 3 membrane-spanning stretches (helical) occupy residues 13-33 (IIPCFIFVELVIMAGTVLLAY), 67-87 (FISPLVLYCVLAATPTAIIFI), and 127-147 (FIGVFAFGLFATDIFVNAGQV). An N-linked (GlcNAc...) asparagine glycan is attached at Asn-163. Helical transmembrane passes span 201–218 (AALSIYSALYATMYITST), 230–247 (VLCLGTLCTAFLTGLNRV), and 257–277 (VIAGFILGTAVALFLGMCVVH). A Phosphoserine modification is found at Ser-307. An N-linked (GlcNAc...) asparagine glycan is attached at Asn-316.

It belongs to the PA-phosphatase related phosphoesterase family.

The protein resides in the cell membrane. The protein localises to the cell projection. Its subcellular location is the neuron projection. In terms of biological role, may play a role in neurite outgrowth and neurogenesis. This chain is Phospholipid phosphatase-related protein type 1, found in Mus musculus (Mouse).